Reading from the N-terminus, the 344-residue chain is Nuclear distribution protein nudE homolog 1 (344 aa).

Residues 1–93 (MEDSGKTFES…MQHSEGYRQI (93 aa)) form a self-association region. Positions 18–188 (WRDLAMTYKQ…ELAVQQKQDK (171 aa)) form a coiled coil. An interaction with PAFAH1B1 region spans residues 88–156 (EGYRQISALE…ERNAFLESEL (69 aa)). The interaction with CENPF stretch occupies residues 167–290 (QRLKDEARDL…QSPSRTSGPA (124 aa)). A disordered region spans residues 181 to 246 (AVQQKQDKPR…DSSTSGTPLT (66 aa)). Ser211 is subject to Phosphoserine. Residues Thr215 and Thr228 each carry the phosphothreonine modification. Ser239 carries the phosphoserine modification. Thr243 and Thr246 each carry phosphothreonine. Cys274 carries the S-palmitoyl cysteine; by ZDHHC2, ZDHHC3 and ZDHHC7 lipid modification. Over residues 279-289 (YDQSPSRTSGP) the composition is skewed to polar residues. The interval 279 to 337 (YDQSPSRTSGPASGRGTKNRDGVDRRPGSTSVGDKGSGKRLEFGKPASEPASPALPSAQ) is disordered. Phosphoserine is present on Ser282. A compositionally biased stretch (basic and acidic residues) spans 296-305 (KNRDGVDRRP). Phosphoserine is present on Ser309. Over residues 324 to 336 (PASEPASPALPSA) the composition is skewed to low complexity.

This sequence belongs to the nudE family. In terms of assembly, homodimer. Interacts with dynactin and PCM1. Interacts with CENPF, LIS1, CNTRL, dynein, tubulin gamma, PAFAH1B1, PCNT, SLMAP and TCP1. Interacts with ZNF365. Interacts with RAB9A; the interaction leads to RAB9A-dynein motor tethering. Interacts (via C-terminus) with MCRS1 (via C-terminus); phosphorylation of NDE1 inhibits the interaction. In terms of processing, phosphorylated in mitosis. Phosphorylation at Thr-246 is essential for the G2/M transition. In terms of tissue distribution, highly expressed in ovary. Also expressed in brain, heart, kidney, large intestine, liver, lung, small intestine and testis.

It is found in the cytoplasm. Its subcellular location is the cytoskeleton. The protein localises to the microtubule organizing center. It localises to the centrosome. The protein resides in the spindle. It is found in the chromosome. Its subcellular location is the centromere. The protein localises to the kinetochore. It localises to the cleavage furrow. The protein resides in the cytoplasmic vesicle membrane. In terms of biological role, required for centrosome duplication and formation and function of the mitotic spindle. Essential for the development of the cerebral cortex. May regulate the production of neurons by controlling the orientation of the mitotic spindle during division of cortical neuronal progenitors of the proliferative ventricular zone of the brain. Orientation of the division plane perpendicular to the layers of the cortex gives rise to two proliferative neuronal progenitors whereas parallel orientation of the division plane yields one proliferative neuronal progenitor and a postmitotic neuron. A premature shift towards a neuronal fate within the progenitor population may result in an overall reduction in the final number of neurons and an increase in the number of neurons in the deeper layers of the cortex. Acts as a RAB9A/B effector that tethers RAB9-associated late endosomes to the dynein motor for their retrograde transport to the trans-Golgi network. This Mus musculus (Mouse) protein is Nuclear distribution protein nudE homolog 1.